Consider the following 271-residue polypeptide: Nuclear egress protein 2 (271 aa).

The Perinuclear space portion of the chain corresponds to 1–249; it reads MSVVGKRVVD…LGRAVALVRR (249 aa). A helical membrane pass occupies residues 250–267; that stretch reads SWPWISAGIAFLCLGLVW. Residues 268–271 lie on the Nuclear side of the membrane; it reads MRPS.

The protein belongs to the herpesviridae NEC2 protein family. In terms of assembly, forms a heterohexameric complex with NEC1. Phosphorylated.

It localises to the host nucleus inner membrane. In terms of biological role, plays an essential role in virion nuclear egress, the first step of virion release from infected cell. Within the host nucleus, NEC1 interacts with the newly formed capsid through the vertexes and directs it to the inner nuclear membrane by associating with NEC2. Induces the budding of the capsid at the inner nuclear membrane as well as its envelopment into the perinuclear space. There, the NEC1/NEC2 complex promotes the fusion of the enveloped capsid with the outer nuclear membrane and the subsequent release of the viral capsid into the cytoplasm where it will reach the secondary budding sites in the host Golgi or trans-Golgi network. This chain is Nuclear egress protein 2, found in Homo sapiens (Human).